Reading from the N-terminus, the 706-residue chain is Transferrin-binding protein B (706 aa).

The N-terminal stretch at 1–20 (MKHIPLTTLCVAISAVLLTA) is a signal peptide. A lipid anchor (N-palmitoyl cysteine) is attached at Cys21. Cys21 carries the S-diacylglycerol cysteine lipid modification. Disordered stretches follow at residues 26-92 (GSNP…KEQV) and 384-412 (GSAIASDKEKDSETKHPFTSDAKDRLEGG). The span at 42–51 (GNTGNTGNAG) shows a compositional bias: gly residues. Basic and acidic residues predominate over residues 389-410 (SDKEKDSETKHPFTSDAKDRLE).

It belongs to the TbpB family.

It localises to the cell outer membrane. It is found in the cell surface. Moraxella acquires iron by extracting it from serum transferrin (TF) in its human host. Acts as a transferrin receptor and is required for transferrin utilization. The chain is Transferrin-binding protein B from Moraxella catarrhalis (Branhamella catarrhalis).